The following is a 306-amino-acid chain: NAD kinase 1 (306 aa).

Asp67 (proton acceptor) is an active-site residue. Residues 67–68, 149–150, and Asp181 contribute to the NAD(+) site; these read DG and NE.

It belongs to the NAD kinase family. A divalent metal cation is required as a cofactor.

The protein localises to the cytoplasm. The enzyme catalyses NAD(+) + ATP = ADP + NADP(+) + H(+). Functionally, involved in the regulation of the intracellular balance of NAD and NADP, and is a key enzyme in the biosynthesis of NADP. Catalyzes specifically the phosphorylation on 2'-hydroxyl of the adenosine moiety of NAD to yield NADP. This is NAD kinase 1 from Thermosynechococcus vestitus (strain NIES-2133 / IAM M-273 / BP-1).